Here is a 560-residue protein sequence, read N- to C-terminus: Arginine--tRNA ligase (560 aa).

The 'HIGH' region signature appears at 121–131 (PNIAKPFSMGH).

This sequence belongs to the class-I aminoacyl-tRNA synthetase family. In terms of assembly, monomer.

It localises to the cytoplasm. It carries out the reaction tRNA(Arg) + L-arginine + ATP = L-arginyl-tRNA(Arg) + AMP + diphosphate. This Exiguobacterium sp. (strain ATCC BAA-1283 / AT1b) protein is Arginine--tRNA ligase.